We begin with the raw amino-acid sequence, 62 residues long: UPF0434 protein RSc2531 (62 aa).

This sequence belongs to the UPF0434 family.

The chain is UPF0434 protein RSc2531 from Ralstonia nicotianae (strain ATCC BAA-1114 / GMI1000) (Ralstonia solanacearum).